Reading from the N-terminus, the 150-residue chain is Large ribosomal subunit protein bL9 (150 aa).

It belongs to the bacterial ribosomal protein bL9 family.

Its function is as follows. Binds to the 23S rRNA. The chain is Large ribosomal subunit protein bL9 from Saccharopolyspora erythraea (strain ATCC 11635 / DSM 40517 / JCM 4748 / NBRC 13426 / NCIMB 8594 / NRRL 2338).